The following is a 257-amino-acid chain: Nickel import system ATP-binding protein NikD (257 aa).

An ABC transporter domain is found at 4–245 (IDIQNLTIKN…HLHPYTERLI (242 aa)). Residue 37–44 (GESGAGKS) participates in ATP binding.

It belongs to the ABC transporter superfamily. The complex is composed of two ATP-binding proteins (NikD and NikE), two transmembrane proteins (NikB and NikC) and a solute-binding protein (NikA).

It localises to the cell membrane. It carries out the reaction Ni(2+)(out) + ATP + H2O = Ni(2+)(in) + ADP + phosphate + H(+). Functionally, part of the ABC transporter complex NikABCDE (Opp2) involved in nickel import. Probably responsible for energy coupling to the transport system. The polypeptide is Nickel import system ATP-binding protein NikD (Staphylococcus aureus (strain Mu50 / ATCC 700699)).